The following is a 491-amino-acid chain: Serralysin (491 aa).

A propeptide spanning residues methionine 1–serine 16 is cleaved from the precursor. Histidine 186 serves as a coordination point for Zn(2+). Residue glutamate 187 is part of the active site. Zn(2+) is bound by residues histidine 190, histidine 196, and tyrosine 226. Residues arginine 263, glycine 265, aspartate 295, glycine 297, glycine 298, aspartate 300, threonine 337, glutamate 339, glycine 344, glycine 346, aspartate 348, asparagine 353, alanine 355, asparagine 357, glycine 361, glycine 362, glycine 364, aspartate 366, glycine 370, glycine 373, aspartate 384, glycine 388, glycine 389, glycine 391, aspartate 402, aspartate 409, and aspartate 419 each contribute to the Ca(2+) site. Hemolysin-type calcium-binding repeat units lie at residues isoleucine 342 to leucine 359, isoleucine 360 to isoleucine 377, and tyrosine 378 to phenylalanine 395.

This sequence belongs to the peptidase M10B family. The cofactor is Ca(2+). Zn(2+) is required as a cofactor.

It localises to the secreted. It carries out the reaction Preferential cleavage of bonds with hydrophobic residues in P1'.. Ca(2+) increases protease activity. Functionally, one of the virulence factors produced during swarmer cell differentiation of the bacteria, which seems to be associated with pathogenesis. The protease activity is limited to IgA1, IgA2, as well as IgG degradation. The protein is Serralysin (zapA) of Proteus mirabilis.